Here is a 522-residue protein sequence, read N- to C-terminus: Poly(A) polymerase (522 aa).

ATP contacts are provided by residues 63–65 (YGS), 76–78 (DID), Asp130, Lys193, Tyr202, and 211–212 (GI). Residues Asp76, Asp78, and Asp130 each coordinate Mg(2+). Residues 475 to 522 (QLKAKEENSIPNEEKKEQLKKEMKQEANTIVKNSSTDDDFMKRFTRKN) form a disordered region. Basic and acidic residues predominate over residues 476-499 (LKAKEENSIPNEEKKEQLKKEMKQ).

This sequence belongs to the poly(A) polymerase family. The cofactor is Mg(2+). Mn(2+) is required as a cofactor.

The protein localises to the cytoplasm. The protein resides in the nucleus. It carries out the reaction RNA(n) + ATP = RNA(n)-3'-adenine ribonucleotide + diphosphate. Its function is as follows. Polymerase that creates the 3'-poly(A) tail of mRNA's. May acquire specificity through interaction with a cleavage and polyadenylation factor. This Entamoeba histolytica (strain ATCC 30459 / HM-1:IMSS / ABRM) protein is Poly(A) polymerase.